A 376-amino-acid chain; its full sequence is Arf-GAP with dual PH domain-containing protein 2 (376 aa).

An Arf-GAP domain is found at 9–130; the sequence is KRLLELLQAA…EFMAEKAVSP (122 aa). The segment at 25 to 48 adopts a C4-type zinc-finger fold; the sequence is CADCGAADPDWASYKLGVFICLHC. PH domains are found at residues 131-232 and 254-360; these read PGDR…AARL and NYLK…GVLS.

As to expression, expressed in many tissues, with highest levels in fat, heart and skeletal muscle. Also detected in kidney, liver and lung.

Its subcellular location is the cytoplasm. It is found in the cell membrane. GTPase-activating protein for the ADP ribosylation factor family (Potential). Binds phosphatidylinositol 4,5-bisphosphate, phosphatidylinositol 3,4,5-trisphosphate (PtdInsP3) and inositol 1,3,4,5-tetrakisphosphate (InsP4). Binding of phosphatidylinositol 3,5-bisphosphate and phosphatidylinositol 3,4-bisphosphate occurs at a much lower affinity. Possesses a stoichiometry of two binding sites for InsP4 with identical affinity. The sequence is that of Arf-GAP with dual PH domain-containing protein 2 (Adap2) from Rattus norvegicus (Rat).